A 145-amino-acid chain; its full sequence is Probable thioredoxin-2 (145 aa).

Residues 39-144 enclose the Thioredoxin domain; it reads VFDIDSVEDF…LDDFIEDVLA (106 aa). Catalysis depends on nucleophile residues Cys-68 and Cys-71. A disulfide bridge links Cys-68 with Cys-71.

Belongs to the thioredoxin family.

In terms of biological role, participates in various redox reactions through the reversible oxidation of its active center dithiol to a disulfide and catalyzes dithiol-disulfide exchange reactions. The chain is Probable thioredoxin-2 (trx-2) from Caenorhabditis elegans.